The sequence spans 592 residues: Glycosyltransferase 25 family member (592 aa).

An N-terminal signal peptide occupies residues 1–13 (MLALLLTTTIVSG). N-linked (GlcNAc...) asparagine glycans are attached at residues asparagine 249 and asparagine 510. Composition is skewed to basic and acidic residues over residues 552–563 (RIQEPKKGDKEQ) and 579–592 (GEHD…RSEL). Residues 552–592 (RIQEPKKGDKEQLPNAPALLSESGIGQGEHDLETKNRRSEL) are disordered. Residues 589 to 592 (RSEL) carry the Prevents secretion from ER motif.

It belongs to the glycosyltransferase 25 family.

Its subcellular location is the endoplasmic reticulum lumen. This chain is Glycosyltransferase 25 family member, found in Anopheles gambiae (African malaria mosquito).